The primary structure comprises 273 residues: Rhamnulose-1-phosphate aldolase (273 aa).

Glu117 is a catalytic residue. Zn(2+) is bound by residues His140, His142, and His211.

It belongs to the aldolase class II family. RhaD subfamily. Requires Zn(2+) as cofactor.

It localises to the cytoplasm. It catalyses the reaction L-rhamnulose 1-phosphate = (S)-lactaldehyde + dihydroxyacetone phosphate. Its pathway is carbohydrate degradation; L-rhamnose degradation; glycerone phosphate from L-rhamnose: step 3/3. Its function is as follows. Catalyzes the reversible cleavage of L-rhamnulose-1-phosphate to dihydroxyacetone phosphate (DHAP) and L-lactaldehyde. The sequence is that of Rhamnulose-1-phosphate aldolase from Listeria innocua serovar 6a (strain ATCC BAA-680 / CLIP 11262).